Here is a 126-residue protein sequence, read N- to C-terminus: Holo-[acyl-carrier-protein] synthase (126 aa).

Mg(2+) is bound by residues D9 and E58.

It belongs to the P-Pant transferase superfamily. AcpS family. It depends on Mg(2+) as a cofactor.

Its subcellular location is the cytoplasm. The enzyme catalyses apo-[ACP] + CoA = holo-[ACP] + adenosine 3',5'-bisphosphate + H(+). Functionally, transfers the 4'-phosphopantetheine moiety from coenzyme A to a Ser of acyl-carrier-protein. The protein is Holo-[acyl-carrier-protein] synthase of Serratia proteamaculans (strain 568).